The following is a 267-amino-acid chain: Small ribosomal subunit protein uS2 (267 aa).

The interval 222-267 (GKALRDQDSEEEIQNKEQDEVSQEEKDDILDEAMNEEDFEIPEDKE) is disordered. Residues 223–240 (KALRDQDSEEEIQNKEQD) are compositionally biased toward basic and acidic residues. A compositionally biased stretch (acidic residues) spans 241-267 (EVSQEEKDDILDEAMNEEDFEIPEDKE).

Belongs to the universal ribosomal protein uS2 family.

The polypeptide is Small ribosomal subunit protein uS2 (Campylobacter hominis (strain ATCC BAA-381 / DSM 21671 / CCUG 45161 / LMG 19568 / NCTC 13146 / CH001A)).